The following is a 462-amino-acid chain: Cytochrome P450 20A1 (462 aa).

The chain crosses the membrane as a helical span at residues 4 to 24 (FAIFAVTFLLALVGAVLYLYP). Cysteine 409 provides a ligand contact to heme.

It belongs to the cytochrome P450 family. The cofactor is heme.

Its subcellular location is the membrane. The sequence is that of Cytochrome P450 20A1 (CYP20A1) from Bos taurus (Bovine).